The sequence spans 125 residues: Small ribosomal subunit protein uS13 (125 aa).

This sequence belongs to the universal ribosomal protein uS13 family. In terms of assembly, part of the 30S ribosomal subunit. Forms a loose heterodimer with protein S19. Forms two bridges to the 50S subunit in the 70S ribosome.

Functionally, located at the top of the head of the 30S subunit, it contacts several helices of the 16S rRNA. In the 70S ribosome it contacts the 23S rRNA (bridge B1a) and protein L5 of the 50S subunit (bridge B1b), connecting the 2 subunits; these bridges are implicated in subunit movement. Contacts the tRNAs in the A and P-sites. The polypeptide is Small ribosomal subunit protein uS13 (Rickettsia prowazekii (strain Madrid E)).